A 134-amino-acid chain; its full sequence is D-xylulose reductase (134 aa).

A disordered region spans residues 31 to 115 (PATTTXYKXQ…XXQXDKIGRY (85 aa)). The span at 50-59 (QTHEGTHQDV) shows a compositional bias: basic and acidic residues.

This sequence belongs to the zinc-containing alcohol dehydrogenase family.

It catalyses the reaction xylitol + NAD(+) = D-xylulose + NADH + H(+). Its activity is regulated as follows. Activated by calcium and inhibited by zinc. In Sus scrofa (Pig), this protein is D-xylulose reductase.